Here is a 403-residue protein sequence, read N- to C-terminus: Casein kinase II subunit alpha-2 (403 aa).

The N-terminal stretch at 1–31 (MHLIFFFSYFLRRYLLLLCAILILRAPLAHS) is a signal peptide. A Protein kinase domain is found at 104–389 (YEVVRKVGRG…AKEAMAHPYF (286 aa)). ATP contacts are provided by residues 110–118 (VGRGKYSEV) and K133. N182 is a glycosylation site (N-linked (GlcNAc...) asparagine). D221 acts as the Proton acceptor in catalysis.

This sequence belongs to the protein kinase superfamily. Ser/Thr protein kinase family. CK2 subfamily. In terms of assembly, heterotetramer of two catalytic alpha subunits and two regulatory beta subunits. In terms of tissue distribution, seems to be present in all plant organs. But seems to be more expressed than CKA1.

Its subcellular location is the nucleus. The protein resides in the nucleolus. The enzyme catalyses L-seryl-[protein] + ATP = O-phospho-L-seryl-[protein] + ADP + H(+). The catalysed reaction is L-threonyl-[protein] + ATP = O-phospho-L-threonyl-[protein] + ADP + H(+). Casein kinases are operationally defined by their preferential utilization of acidic proteins such as caseins as substrates. The alpha chain contains the catalytic site. The tetrameric holoenzyme CK2, composed of two alpha and two beta subunits, phosphorylates the transcription factor PIF1 after an exposure to light, resulting in a proteasome-dependent degradation of PIF1 and promotion of photomorphogenesis. CK2 phosphorylates translation initiation factors. May participate in the regulation of the initiation of translation. Acts as circadian clock component that maintains the correct period length through phosphorylation of CCA1. May act as an ectokinase that phosphorylates several extracellular proteins. The protein is Casein kinase II subunit alpha-2 of Arabidopsis thaliana (Mouse-ear cress).